Here is a 192-residue protein sequence, read N- to C-terminus: Cell division protein SepF (192 aa).

A disordered region spans residues 154-192; the sequence is QEEPAPSNVTTTTQQSEETISESVTAPEPAWGTPVASAI. The segment covering 162 to 178 has biased composition (low complexity); sequence VTTTTQQSEETISESVT.

It belongs to the SepF family. Homodimer. Interacts with FtsZ.

The protein resides in the cytoplasm. Its function is as follows. Cell division protein that is part of the divisome complex and is recruited early to the Z-ring. Probably stimulates Z-ring formation, perhaps through the cross-linking of FtsZ protofilaments. Its function overlaps with FtsA. The sequence is that of Cell division protein SepF from Prochlorococcus marinus (strain MIT 9211).